A 598-amino-acid polypeptide reads, in one-letter code: uncharacterized protein (598 aa).

Residue Ser46 is modified to Phosphoserine. The SAC domain occupies 106–441 (LQNHLKTGPF…ADYISLSYSG (336 aa)). The next 2 helical transmembrane spans lie at 508 to 528 (TIRCVPYILLACLILFFMTLF) and 535 to 555 (ILPPSILLILTFLGIVASLYY).

It is found in the endoplasmic reticulum membrane. This is an uncharacterized protein from Schizosaccharomyces pombe (strain 972 / ATCC 24843) (Fission yeast).